A 333-amino-acid polypeptide reads, in one-letter code: Calcium uniporter protein, mitochondrial (333 aa).

The N-terminal 22 residues, 1 to 22 (MRNGRCLVTPFVTAQRLANLRN), are a transit peptide targeting the mitochondrion. Over 23–214 (TLWNRQQIAF…QECEAHTDRV (192 aa)) the chain is Mitochondrial matrix. Residues 180 to 193 (KKLLLQLENAETLL) are a coiled coil. The tract at residues 195-213 (PLHDAKRKIEQECEAHTDR) is outer juxtamembrane helix (OJMH). Residues 215–234 (MWAGFAAMGVQTGLFARLTW) form a helical membrane-spanning segment. At 235–243 (WEYSWDIME) the chain is on the mitochondrial intermembrane side. The Selectivity filter motif lies at 239–247 (WDIMEPVTY). Position 243 (Glu243) interacts with Ca(2+). The helical transmembrane segment at 244-260 (PVTYFATYSTVCATFGY) threads the bilayer. At 261–333 (YLYTQQSFEY…SYLSNLEAEK (73 aa)) the chain is on the mitochondrial matrix side. The segment at 262-271 (LYTQQSFEYP) is inner juxtamembrane helix (IJMH). Residues 289 to 316 (QNFDIEKYNRLVTEVDELRNQLKRMRDP) are a coiled coil.

The protein belongs to the MCU (TC 1.A.77) family.

The protein localises to the mitochondrion inner membrane. It carries out the reaction Ca(2+)(in) = Ca(2+)(out). With respect to regulation, inhibited by ruthenium red or its derivative Ru360; possibly by obstructing the pore. Functionally, mitochondrial inner membrane calcium uniporter that mediates calcium uptake into mitochondria. Constitutes a pore-forming and calcium-conducting subunit. Mitochondrial calcium homeostasis plays key roles in cellular physiology and regulates cell bioenergetics, cytoplasmic calcium signals and activation of cell death pathways. Required for rapid mitochondrial calcium uptake and mitochondrial reactive oxygen species (mtROS) production after wounding. In addition, together with mitochondrial calcium regulator micu-1, required for mitochondrial calcium uptake following axon injury in PLM touch receptor neurons. The sequence is that of Calcium uniporter protein, mitochondrial from Caenorhabditis elegans.